The chain runs to 51 residues: Large ribosomal subunit protein eL39 (51 aa).

Belongs to the eukaryotic ribosomal protein eL39 family. Part of the 50S ribosomal subunit.

This chain is Large ribosomal subunit protein eL39, found in Pyrococcus furiosus (strain ATCC 43587 / DSM 3638 / JCM 8422 / Vc1).